Consider the following 430-residue polypeptide: Asparagine--tRNA ligase (430 aa).

The protein belongs to the class-II aminoacyl-tRNA synthetase family. Homodimer.

It is found in the cytoplasm. The enzyme catalyses tRNA(Asn) + L-asparagine + ATP = L-asparaginyl-tRNA(Asn) + AMP + diphosphate + H(+). In Geobacillus thermodenitrificans (strain NG80-2), this protein is Asparagine--tRNA ligase.